Reading from the N-terminus, the 181-residue chain is UPF0301 protein COXBURSA331_A2219 (181 aa).

The protein belongs to the UPF0301 (AlgH) family.

The chain is UPF0301 protein COXBURSA331_A2219 from Coxiella burnetii (strain RSA 331 / Henzerling II).